The following is a 382-amino-acid chain: Apolipoprotein A-IV (382 aa).

The signal sequence occupies residues 1–20; that stretch reads MFLKAVVLSLALVAVTGARA. Repeat copies occupy residues 33–54, 60–81, 82–103, 115–136, 137–158, 159–180, 181–202, 203–224, 225–246, 247–268, 269–286, 287–308, and 309–330. The segment at 33 to 330 is 13 X 22 AA approximate tandem repeats; it reads DYFSQLGSNA…QVEDLRQKLG (298 aa). The tract at residues 361-382 is disordered; sequence EASQGQSQALPAQEKAQAPLEG.

The protein belongs to the apolipoprotein A1/A4/E family. In terms of assembly, homodimer. In terms of tissue distribution, secreted in plasma.

The protein resides in the secreted. May have a role in chylomicrons and VLDL secretion and catabolism. Required for efficient activation of lipoprotein lipase by ApoC-II; potent activator of LCAT. Apoa-IV is a major component of HDL and chylomicrons. In Sus scrofa (Pig), this protein is Apolipoprotein A-IV (APOA4).